The chain runs to 449 residues: Histone PARylation factor 1-like (449 aa).

The CCHC-type zinc-finger motif lies at 3–28 (KEDCKYWDKCYQQNPAHLSKYNHPKK). The interval 18-93 (AHLSKYNHPK…AKGSYEAETE (76 aa)) is disordered. Basic and acidic residues-rich tracts occupy residues 28 to 41 (KQQE…EGKK) and 54 to 69 (EQKK…KDKS). Serine 72 carries the post-translational modification Phosphoserine. The active-site Proton donor is the glutamate 384.

Belongs to the HPF1 family.

The protein localises to the chromosome. It is found in the nucleus. Its function is as follows. Cofactor for serine ADP-ribosylation that confers serine specificity on Parp. Switches the amino acid specificity of Parp from aspartate or glutamate to serine residues. Acts by completing the active site of Parp: forms a composite active site composed of residues from HPF1/CG1218 and Parp. The polypeptide is Histone PARylation factor 1-like (Drosophila melanogaster (Fruit fly)).